A 353-amino-acid chain; its full sequence is UDP-xylose transporter 2 (353 aa).

The next 10 helical transmembrane spans lie at 7–27 (FQLG…SIVI), 31–51 (ALIS…HLLV), 75–95 (VLGF…SLGF), 100–120 (FYQM…TIFF), 132–152 (LVIL…LNML), 154–174 (SVLS…TNTI), 194–214 (AITL…QNVF), 224–244 (FFIV…FLVI), 250–270 (VTYQ…GYLL), and 280–300 (ILGI…CTLE). Positions 308-353 (TSTQLPQMDENEKDPLVSAENGSGLISDNGVQKQDPVWNSNKDFQA) are disordered. Over residues 327 to 353 (ENGSGLISDNGVQKQDPVWNSNKDFQA) the composition is skewed to polar residues. Ser-334 is subject to Phosphoserine.

This sequence belongs to the TPT transporter family. TPT (TC 2.A.7.9) subfamily. Ubiquitous.

It is found in the golgi apparatus membrane. In terms of biological role, nucleotide-sugar transporter that transports UDP-xylose and UMP in a strict counter-exchange mode. The chain is UDP-xylose transporter 2 from Arabidopsis thaliana (Mouse-ear cress).